A 172-amino-acid polypeptide reads, in one-letter code: uncharacterized protein (172 aa).

The 113-residue stretch at 10-122 folds into the HotDog ACOT-type domain; the sequence is KESKVVKTSR…FLTFVALDSN (113 aa). The segment at 148-172 is disordered; sequence RANERKNRKRHSQALANALGTDKPW.

It belongs to the acyl coenzyme A hydrolase family.

This is an uncharacterized protein from Bacillus subtilis (strain 168).